The primary structure comprises 234 residues: MVSLDKAVIARLRKGGEEFEVLVDPYLARDLKEGKEVNFEDLLAAEEVFKDAKKGERASVDELRKIFGTDDVFEIARKIILEGEVQITAEQRREMLEAKRKQIINFISRNTIDPRTNAPHPPSRIERALEEAKVHIDIFKSVEAQVKDIVKALKPILPLKFEEMEIAIKIPPEHTGRAISALYNFGGVTREEWQRDGSWICVMRIPSGMYGDLMDLLGKVAKGEALTKVLRRIG.

Belongs to the SDO1/SBDS family.

This Archaeoglobus fulgidus (strain ATCC 49558 / DSM 4304 / JCM 9628 / NBRC 100126 / VC-16) protein is Ribosome maturation protein SDO1 homolog.